The primary structure comprises 199 residues: MTTSAARKGLRTRGSACPRATRSASSISSRAQVIVAGPITDKLAQRTVAHLLALAEDSDEPINMLISSPGGHVESGDMIHDVIKFIRPTVRTIGLAWVASAGALIFVGADKENRYCLPNTRFLIHQPSVGIGGTSTDMMIQAEQVRLMRDRLNQIFAEATGQPVERIEKDTQRDFWLNTQEALDYGLLGKVIRSVDELK.

The interval 1–23 (MTTSAARKGLRTRGSACPRATRS) is disordered. Catalysis depends on Ser100, which acts as the Nucleophile. His125 is an active-site residue.

Belongs to the peptidase S14 family. In terms of assembly, fourteen ClpP subunits assemble into 2 heptameric rings which stack back to back to give a disk-like structure with a central cavity, resembling the structure of eukaryotic proteasomes.

Its subcellular location is the cytoplasm. The catalysed reaction is Hydrolysis of proteins to small peptides in the presence of ATP and magnesium. alpha-casein is the usual test substrate. In the absence of ATP, only oligopeptides shorter than five residues are hydrolyzed (such as succinyl-Leu-Tyr-|-NHMec, and Leu-Tyr-Leu-|-Tyr-Trp, in which cleavage of the -Tyr-|-Leu- and -Tyr-|-Trp bonds also occurs).. In terms of biological role, cleaves peptides in various proteins in a process that requires ATP hydrolysis. Has a chymotrypsin-like activity. Plays a major role in the degradation of misfolded proteins. This is ATP-dependent Clp protease proteolytic subunit from Paracoccus denitrificans.